The chain runs to 189 residues: Movement protein (189 aa).

This sequence belongs to the tombusvirus/aureusvirus movement protein p22 family.

The protein resides in the host membrane. Functionally, transports viral genome to neighboring plant cells directly through plasmosdesmata, without any budding. The movement protein allows efficient cell to cell propagation, by bypassing the host cell wall barrier. This is Movement protein from Cymbidium ringspot virus (CymRSV).